A 138-amino-acid chain; its full sequence is Phosphoribosyl-AMP cyclohydrolase (138 aa).

Residue Asp-92 participates in Mg(2+) binding. Cys-93 is a Zn(2+) binding site. 2 residues coordinate Mg(2+): Asp-94 and Asp-96. The Zn(2+) site is built by Cys-109 and Cys-116.

Belongs to the PRA-CH family. As to quaternary structure, homodimer. Requires Mg(2+) as cofactor. Zn(2+) serves as cofactor.

The protein resides in the cytoplasm. It catalyses the reaction 1-(5-phospho-beta-D-ribosyl)-5'-AMP + H2O = 1-(5-phospho-beta-D-ribosyl)-5-[(5-phospho-beta-D-ribosylamino)methylideneamino]imidazole-4-carboxamide. Its pathway is amino-acid biosynthesis; L-histidine biosynthesis; L-histidine from 5-phospho-alpha-D-ribose 1-diphosphate: step 3/9. Its function is as follows. Catalyzes the hydrolysis of the adenine ring of phosphoribosyl-AMP. The polypeptide is Phosphoribosyl-AMP cyclohydrolase (Clavibacter sepedonicus (Clavibacter michiganensis subsp. sepedonicus)).